We begin with the raw amino-acid sequence, 104 residues long: Probable monothiol glutaredoxin 2 (104 aa).

The 98-residue stretch at 7-104 folds into the Glutaredoxin domain; it reads FEFIENEIKN…NGELEKMLKG (98 aa). K24 contacts glutathione. A [2Fe-2S] cluster-binding site is contributed by C32. Residues R61, F73, and 86–87 contribute to the glutathione site; that span reads CD.

This sequence belongs to the glutaredoxin family. Monothiol subfamily.

The chain is Probable monothiol glutaredoxin 2 (grxC2) from Rickettsia felis (strain ATCC VR-1525 / URRWXCal2) (Rickettsia azadi).